The chain runs to 1267 residues: DNA-directed RNA polymerase subunit beta'' (1267 aa).

Residues C222, C290, C297, and C300 each contribute to the Zn(2+) site.

It belongs to the RNA polymerase beta' chain family. RpoC2 subfamily. In plastids the minimal PEP RNA polymerase catalytic core is composed of four subunits: alpha, beta, beta', and beta''. When a (nuclear-encoded) sigma factor is associated with the core the holoenzyme is formed, which can initiate transcription. Zn(2+) is required as a cofactor.

The protein resides in the plastid. It localises to the chloroplast. It carries out the reaction RNA(n) + a ribonucleoside 5'-triphosphate = RNA(n+1) + diphosphate. Functionally, DNA-dependent RNA polymerase catalyzes the transcription of DNA into RNA using the four ribonucleoside triphosphates as substrates. This is DNA-directed RNA polymerase subunit beta'' from Emiliania huxleyi (Coccolithophore).